The sequence spans 455 residues: UDP-glycosyltransferase 87A2 (455 aa).

Position 1 is an N-acetylmethionine (Met1). UDP-alpha-D-glucose is bound by residues Ser278, Cys327 to Gln329, His344 to Glu352, and Phe366 to Gln369.

The protein belongs to the UDP-glycosyltransferase family.

This is UDP-glycosyltransferase 87A2 (UGT87A2) from Arabidopsis thaliana (Mouse-ear cress).